The following is a 573-amino-acid chain: Proline--tRNA ligase (573 aa).

The protein belongs to the class-II aminoacyl-tRNA synthetase family. ProS type 1 subfamily. As to quaternary structure, homodimer.

It localises to the cytoplasm. It carries out the reaction tRNA(Pro) + L-proline + ATP = L-prolyl-tRNA(Pro) + AMP + diphosphate. In terms of biological role, catalyzes the attachment of proline to tRNA(Pro) in a two-step reaction: proline is first activated by ATP to form Pro-AMP and then transferred to the acceptor end of tRNA(Pro). As ProRS can inadvertently accommodate and process non-cognate amino acids such as alanine and cysteine, to avoid such errors it has two additional distinct editing activities against alanine. One activity is designated as 'pretransfer' editing and involves the tRNA(Pro)-independent hydrolysis of activated Ala-AMP. The other activity is designated 'posttransfer' editing and involves deacylation of mischarged Ala-tRNA(Pro). The misacylated Cys-tRNA(Pro) is not edited by ProRS. The polypeptide is Proline--tRNA ligase (Citrifermentans bemidjiense (strain ATCC BAA-1014 / DSM 16622 / JCM 12645 / Bem) (Geobacter bemidjiensis)).